The primary structure comprises 341 residues: Farnesyl pyrophosphate synthase 2 (341 aa).

Isopentenyl diphosphate contacts are provided by Lys-46, Arg-49, and Gln-85. Positions 92 and 96 each coordinate Mg(2+). Arg-101 provides a ligand contact to dimethylallyl diphosphate. Position 102 (Arg-102) interacts with isopentenyl diphosphate. Residues Lys-189, Thr-190, Gln-228, Lys-245, and Lys-254 each contribute to the dimethylallyl diphosphate site.

This sequence belongs to the FPP/GGPP synthase family. Requires Mg(2+) as cofactor. In terms of tissue distribution, mainly expressed in trichomes, roots and flowers, and, to a lower extent, in leaves and stems.

The protein localises to the cytoplasm. The protein resides in the nucleus. The enzyme catalyses isopentenyl diphosphate + dimethylallyl diphosphate = (2E)-geranyl diphosphate + diphosphate. It catalyses the reaction isopentenyl diphosphate + (2E)-geranyl diphosphate = (2E,6E)-farnesyl diphosphate + diphosphate. It participates in isoprenoid biosynthesis; farnesyl diphosphate biosynthesis; farnesyl diphosphate from geranyl diphosphate and isopentenyl diphosphate: step 1/1. The protein operates within sesquiterpene biosynthesis. It functions in the pathway isoprenoid biosynthesis; geranyl diphosphate biosynthesis; geranyl diphosphate from dimethylallyl diphosphate and isopentenyl diphosphate: step 1/1. Its function is as follows. Catalyzes the sequential condensation of isopentenyl pyrophosphate with the allylic pyrophosphates, dimethylallyl pyrophosphate, and then with the resultant geranylpyrophosphate to the ultimate product farnesyl pyrophosphate. The sequence is that of Farnesyl pyrophosphate synthase 2 from Cannabis sativa (Hemp).